Consider the following 481-residue polypeptide: Ceramide-binding protein SVF1 (481 aa).

A peripherally associates with membranes region spans residues 1 to 18 (MLKWIKGGISAVTGMAEP). 2 disordered regions span residues 197 to 251 (VKKE…DRTI) and 358 to 389 (DEQL…EEEY). Acidic residues-rich tracts occupy residues 203–245 (PESD…VEIT) and 373–388 (GEDE…EEEE).

Belongs to the SVF1 family. Post-translationally, acetylated at the N-terminus in a NatC complex-dependent manner, which is required for membrane targeting.

It is found in the golgi apparatus. Its subcellular location is the cis-Golgi network membrane. It localises to the endoplasmic reticulum membrane. The protein resides in the cytoplasm. The protein localises to the nucleus. In terms of biological role, ceramide-binding protein that may transfer ceramides from the endoplasmic reticulum membrane to the cis-Golgi network membrane, and is thereby required for the biosynthesis of complex sphingolipids. Required for survival in response to oxidative stress. Involved in the diauxic shift. In Saccharomyces cerevisiae (strain ATCC 204508 / S288c) (Baker's yeast), this protein is Ceramide-binding protein SVF1 (SVF1).